Here is a 436-residue protein sequence, read N- to C-terminus: Adenylosuccinate synthetase (436 aa).

Residues 12 to 18 (GDEGKGK) and 40 to 42 (GHT) each bind GTP. Residue Asp-13 is the Proton acceptor of the active site. The Mg(2+) site is built by Asp-13 and Gly-40. IMP contacts are provided by residues 13–16 (DEGK), 38–41 (NAGH), Thr-128, Arg-142, Gln-223, Thr-238, and Arg-302. The active-site Proton donor is His-41. A substrate-binding site is contributed by 298–304 (TTTGRRR). Residues Arg-304, 330-332 (KLD), and 412-414 (SLG) each bind GTP.

The protein belongs to the adenylosuccinate synthetase family. Homodimer. The cofactor is Mg(2+).

It is found in the cytoplasm. It carries out the reaction IMP + L-aspartate + GTP = N(6)-(1,2-dicarboxyethyl)-AMP + GDP + phosphate + 2 H(+). Its pathway is purine metabolism; AMP biosynthesis via de novo pathway; AMP from IMP: step 1/2. Functionally, plays an important role in the de novo pathway of purine nucleotide biosynthesis. Catalyzes the first committed step in the biosynthesis of AMP from IMP. The chain is Adenylosuccinate synthetase from Prochlorococcus marinus (strain AS9601).